A 2474-amino-acid polypeptide reads, in one-letter code: Highly reducing polyketide synthase 40 (2474 aa).

One can recognise a Ketosynthase family 3 (KS3) domain in the interval 1 to 294 (MFKETEIQQR…GSNAHIIIDD (294 aa)). Active-site for beta-ketoacyl synthase activity residues include cysteine 42, histidine 177, and histidine 217. Residues 459–798 (FVFTGQGAQW…GYESVLRRGT (340 aa)) enclose the Malonyl-CoA:ACP transacylase (MAT) domain. The interval 864–998 (HELLGAPVPD…GLVVTEYEQP (135 aa)) is N-terminal hotdog fold. The PKS/mFAS DH domain maps to 864–1182 (HELLGAPVPD…ITTVARSEGA (319 aa)). The Proton acceptor; for dehydratase activity role is filled by histidine 896. A C-terminal hotdog fold region spans residues 1027 to 1182 (KVETSFRQLY…ITTVARSEGA (156 aa)). Aspartate 1093 (proton donor; for dehydratase activity) is an active-site residue. The interval 1232 to 1535 (VEMMCFLYIK…DLHIYDFPDH (304 aa)) is methyltransferase (CMet) domain. Residues 1770 to 2063 (GLLDSLQFQD…SGSHMGKLVL (294 aa)) form the Enoyl reductase (ER) domain. The Ketoreductase (KR) domain maps to 2087–2263 (ASYLLSGGLG…PGVAVDLGMI (177 aa)). A Carrier domain is found at 2385-2462 (DAAKIVSAAI…ELAELAAKRS (78 aa)). Serine 2422 carries the O-(pantetheine 4'-phosphoryl)serine modification.

It depends on pantetheine 4'-phosphate as a cofactor.

It participates in secondary metabolite biosynthesis. Its function is as follows. Highly reducing polyketide synthase; part of the gene cluster that mediates the biosynthesis of the gamma-pyrones fusapyrone (FPY) and deoxyfusapyrone (dFPY). FPY is an undecaketide and thus likely synthesized by the polyketide synthase FPY1 from acetyl-CoA functioning as starter unit and the addition of 10 malonyl-CoA extender units by successive Claisen-condensations. Next to this, FPY shares some rare features: C-glycosylated 4-deoxyglucose at C-3, a gem-dimethyl group at C-13, and an alpha-beta to beta-gamma double bond shift at C-20. During FPY biosynthesis mono-C-methyl groups are transferred to the tetra-, penta-, hexa- and heptaketide, while two C-methyl groups are transferred to the nonaketide, suggesting that the CMet domain is programmed to selectively catalyze two successive C-alpha-methylation reactions of the nonaketide, while other alpha-carbons are non- or mono-methylated only. While the origin of the 4'-deoxyglucose moiety remains opaque, its transfer to C-3 is most likely mediated by the C-glycosyltransferase FPY2. Next to this, the hydroxyl group present at C-33 and discriminating between FPY and dFPY, is likely to be installed by the cytochrome P450 monooxygenase FPY7. No putative function can be predicted for the remaining genes FPY3-FPY6. The polypeptide is Highly reducing polyketide synthase 40 (Fusarium mangiferae (Mango malformation disease fungus)).